Consider the following 315-residue polypeptide: Methenyltetrahydromethanopterin cyclohydrolase (315 aa).

Belongs to the MCH family.

It is found in the cytoplasm. The catalysed reaction is 5,10-methenyl-5,6,7,8-tetrahydromethanopterin + H2O = N(5)-formyl-5,6,7,8-tetrahydromethanopterin + H(+). It participates in one-carbon metabolism; methanogenesis from CO(2); 5,10-methenyl-5,6,7,8-tetrahydromethanopterin from CO(2): step 3/3. Catalyzes the reversible interconversion of 5-formyl-H(4)MPT to methenyl-H(4)MPT(+). The protein is Methenyltetrahydromethanopterin cyclohydrolase of Methanospirillum hungatei JF-1 (strain ATCC 27890 / DSM 864 / NBRC 100397 / JF-1).